A 147-amino-acid chain; its full sequence is Receptor activity-modifying protein 3 (147 aa).

Positions Met-1–Ala-22 are cleaved as a signal peptide. The Extracellular segment spans residues Gln-23 to Asp-112. Residues Asn-28, Asn-57, Asn-70, and Asn-102 are each glycosylated (N-linked (GlcNAc...) asparagine). Disulfide bonds link Cys-39/Cys-71 and Cys-56/Cys-103. Residues Pro-113–Val-137 form a helical membrane-spanning segment. Over Trp-138–Leu-147 the chain is Cytoplasmic.

This sequence belongs to the RAMP family. As to quaternary structure, heterodimer of CALCRL and RAMP3; interaction induces allosteric modulation of CALCRL function and ligand specificity for adrenomedullin/ADM and intermedin/ADM2. Heterodimer of CALCR and RAMP3; interaction form the receptor complex AMYR3 for amylin/IAPP. Interacts with GPER1.

The protein localises to the cell membrane. It localises to the membrane. Functionally, accessory protein that interacts with and modulates the function of G-protein coupled receptors including calcitonin gene-related peptide type 1 receptor (CALCRL), calcitonin receptor (CALCR) and G-protein coupled estrogen receptor 1 (GPER1). Required for the transport of CALCRL and GPER1 receptors to the plasma membrane. Plays a role in cardioprotection by reducing cardiac hypertrophy and perivascular fibrosis in a GPER1-dependent manner. Together with CALCRL, form a receptor complex for adrenomedullin/ADM and intermedin/ADM2. Together with CALCR, act as a receptor complex for amylin/IAPP. This Rattus norvegicus (Rat) protein is Receptor activity-modifying protein 3.